Consider the following 249-residue polypeptide: Elongation factor Ts (249 aa).

Residues 82–85 (TDFV) form an involved in Mg(2+) ion dislocation from EF-Tu region. The tract at residues 215–249 (QAGQLAPEAESTTETADATSETTTEKSSAKKKKKK) is disordered. Over residues 222–236 (EAESTTETADATSET) the composition is skewed to low complexity.

This sequence belongs to the EF-Ts family.

It is found in the cytoplasm. In terms of biological role, associates with the EF-Tu.GDP complex and induces the exchange of GDP to GTP. It remains bound to the aminoacyl-tRNA.EF-Tu.GTP complex up to the GTP hydrolysis stage on the ribosome. The polypeptide is Elongation factor Ts (Rippkaea orientalis (strain PCC 8801 / RF-1) (Cyanothece sp. (strain PCC 8801))).